Reading from the N-terminus, the 1488-residue chain is Chromosome partition protein MukB (1488 aa).

Residue 34-41 (GGNGAGKS) coordinates ATP. Coiled-coil stretches lie at residues 326-418 (LEAD…QYNQ), 444-472 (LDTFQAKEQEATEKLLSLEQKMSVAQTAH), and 509-602 (RHLA…QRAP). Residues 666 to 783 (PGGAEDQRLN…SLPIFGRAAR (118 aa)) are flexible hinge. Coiled-coil stretches lie at residues 835–923 (EAEI…AKLE), 977–1116 (EMLS…AKAG), and 1209–1265 (VEAI…LQSV).

It belongs to the SMC family. MukB subfamily. As to quaternary structure, homodimerization via its hinge domain. Binds to DNA via its C-terminal region. Interacts, and probably forms a ternary complex, with MukE and MukF via its C-terminal region. The complex formation is stimulated by calcium or magnesium. Interacts with tubulin-related protein FtsZ.

The protein resides in the cytoplasm. It localises to the nucleoid. Plays a central role in chromosome condensation, segregation and cell cycle progression. Functions as a homodimer, which is essential for chromosome partition. Involved in negative DNA supercoiling in vivo, and by this means organize and compact chromosomes. May achieve or facilitate chromosome segregation by condensation DNA from both sides of a centrally located replisome during cell division. The protein is Chromosome partition protein MukB of Salmonella paratyphi B (strain ATCC BAA-1250 / SPB7).